A 384-amino-acid chain; its full sequence is AIAAVITFLILFTIFGNALVILAVLTSRSLRAPQNLFLVSLAAADILVATLIIPFSLANELLGYWYFRRTWCEVYLALDVLFCTSSIVHLCAISLDRYWAVSRALQYNSKRTPRRIKCVILTVWLIAAAISLPPLIYKGDQGPQPRGRPQCKLNQEAWYILSSSIGSFFAPCLIMILVYLRIYLIAKRSNRRGPRAKGAPREGEPKQPHPLPAGPSALANSPTLASSLAVTGEANGHSEPPGEKERETPEDPGTLTLPPSWPVLPNSGQGQKEGVCGASPEEEEECGSPAVPASPALACSPPLQQPKGSRVLATLRGQVLLGRGVGTAGGQWWRRRAQLTREKRFTFVLAVVIGVFVLCWFPFFFSYSLGAICPQHCKVPHGLF.

A helical membrane pass occupies residues 1–25; that stretch reads AIAAVITFLILFTIFGNALVILAVL. At 26–36 the chain is on the cytoplasmic side; sequence TSRSLRAPQNL. A helical membrane pass occupies residues 37 to 62; it reads FLVSLAAADILVATLIIPFSLANELL. The Extracellular segment spans residues 63-72; that stretch reads GYWYFRRTWC. Cys-72 and Cys-151 form a disulfide bridge. Residues 73-95 form a helical membrane-spanning segment; sequence EVYLALDVLFCTSSIVHLCAISL. Residues 96 to 117 lie on the Cytoplasmic side of the membrane; it reads DRYWAVSRALQYNSKRTPRRIK. A helical transmembrane segment spans residues 118–140; that stretch reads CVILTVWLIAAAISLPPLIYKGD. Topologically, residues 141 to 156 are extracellular; sequence QGPQPRGRPQCKLNQE. Residues 157–180 traverse the membrane as a helical segment; that stretch reads AWYILSSSIGSFFAPCLIMILVYL. Topologically, residues 181–348 are cytoplasmic; that stretch reads RIYLIAKRSN…LTREKRFTFV (168 aa). The tract at residues 192–289 is disordered; the sequence is RGPRAKGAPR…PEEEEECGSP (98 aa). Positions 218 to 229 are enriched in polar residues; it reads LANSPTLASSLA. The span at 240–249 shows a compositional bias: basic and acidic residues; that stretch reads PPGEKERETP. A helical transmembrane segment spans residues 349–372; sequence LAVVIGVFVLCWFPFFFSYSLGAI. At 373–381 the chain is on the extracellular side; it reads CPQHCKVPH. The chain crosses the membrane as a helical span at residues 382–384; sequence GLF.

This sequence belongs to the G-protein coupled receptor 1 family. Adrenergic receptor subfamily. ADRA2B sub-subfamily. Interacts with RAB26. Interacts with PPP1R9B. Interacts with GGA1, GGA2 and GGA3.

The protein localises to the cell membrane. Alpha-2 adrenergic receptors mediate the catecholamine-induced inhibition of adenylate cyclase through the action of G proteins. The chain is Alpha-2B adrenergic receptor (ADRA2B) from Elephas maximus (Indian elephant).